A 950-amino-acid polypeptide reads, in one-letter code: Protocadherin alpha-3 (950 aa).

The N-terminal stretch at M1–G29 is a signal peptide. Cadherin domains lie at Q30 to F133, P134 to F242, E243 to L350, V351 to F455, S456 to L565, and V581 to A678. Residues Q30–N697 lie on the Extracellular side of the membrane. N257 and N265 each carry an N-linked (GlcNAc...) asparagine glycan. N548 carries an N-linked (GlcNAc...) asparagine glycan. Residues V698–Y718 form a helical membrane-spanning segment. Topologically, residues T719 to Q950 are cytoplasmic. PXXP repeat units follow at residues P734–P737 and P774–P777. The 6 X 4 AA repeats of P-X-X-P stretch occupies residues P734–P894. Disordered regions lie at residues P777–W806, G831–P856, and F869–Q950. The segment covering S782–A797 has biased composition (basic and acidic residues). PXXP repeat units lie at residues P799 to P802, P832 to P835, P873 to P876, and P891 to P894. A compositionally biased stretch (basic and acidic residues) spans D909–K923.

It is found in the cell membrane. Its function is as follows. Potential calcium-dependent cell-adhesion protein. May be involved in the establishment and maintenance of specific neuronal connections in the brain. In Homo sapiens (Human), this protein is Protocadherin alpha-3 (PCDHA3).